Reading from the N-terminus, the 698-residue chain is Protein let-99 (698 aa).

A DEP domain is found at 23–107 (FRSNLSLKTN…SESRIYLFMK (85 aa)). Disordered regions lie at residues 115-188 (PKPR…DDEI) and 653-672 (ITRS…QASP). The span at 146 to 157 (RPPKARLPRRLS) shows a compositional bias: basic residues. Positions 178–188 (HGFDDHKDDEI) are enriched in basic and acidic residues.

Its subcellular location is the cytoplasm. The protein resides in the cell cortex. Required for the proper orientation of spindles after the establishment of polarity. May play a role in interactions between the astral microtubules and the cortical cytoskeleton. Required for asymmetric forces on nuclei and spindles. Acts downstream of the PAR signaling as an intermediate that transduces polarity information to the machinery that positions the mitotic spindle, possibly by regulating force generation. Regulates gpr-1/2 asymmetric cortical localization during the first embryonic cell divisions. Acts antagonistically to the gpr-1/2 signaling pathway. Regulates mes-1 expression and/or localization pattern during early embryogenesis. In Caenorhabditis elegans, this protein is Protein let-99 (let-99).